A 180-amino-acid chain; its full sequence is NADH-quinone oxidoreductase subunit I (180 aa).

2 4Fe-4S ferredoxin-type domains span residues 50 to 80 (LTRNIDGGERCVACNLCAVVCPVDCISLQKS) and 90 to 119 (KFFRINFSRCIFCGLCEEACPTAAIQLMPD). [4Fe-4S] cluster-binding residues include Cys-60, Cys-63, Cys-66, Cys-70, Cys-99, Cys-102, Cys-105, and Cys-109.

The protein belongs to the complex I 23 kDa subunit family. In terms of assembly, NDH-1 is composed of 13 different subunits. Subunits NuoA, H, J, K, L, M, N constitute the membrane sector of the complex. The cofactor is [4Fe-4S] cluster.

The protein localises to the cell membrane. The enzyme catalyses a quinone + NADH + 5 H(+)(in) = a quinol + NAD(+) + 4 H(+)(out). NDH-1 shuttles electrons from NADH, via FMN and iron-sulfur (Fe-S) centers, to quinones in the respiratory chain. The immediate electron acceptor for the enzyme in this species is believed to be ubiquinone. Couples the redox reaction to proton translocation (for every two electrons transferred, four hydrogen ions are translocated across the cytoplasmic membrane), and thus conserves the redox energy in a proton gradient. The protein is NADH-quinone oxidoreductase subunit I of Buchnera aphidicola subsp. Schizaphis graminum (strain Sg).